The primary structure comprises 173 residues: Urease accessory protein UreE (173 aa).

The disordered stretch occupies residues 136-173 (PEGGAYAGSGQDHHDHSHGEHTQGEHTHDEAAEPHHHG). Over residues 146–173 (QDHHDHSHGEHTQGEHTHDEAAEPHHHG) the composition is skewed to basic and acidic residues.

It belongs to the UreE family.

The protein resides in the cytoplasm. Involved in urease metallocenter assembly. Binds nickel. Probably functions as a nickel donor during metallocenter assembly. This chain is Urease accessory protein UreE, found in Beijerinckia indica subsp. indica (strain ATCC 9039 / DSM 1715 / NCIMB 8712).